The following is a 1783-amino-acid chain: uncharacterized protein (1783 aa).

The helical transmembrane segment at 16–36 threads the bilayer; that stretch reads FFLLFGIIFVLFSIIFLETSI. Positions 105 to 119 are enriched in low complexity; sequence GSDSGQSNGSGDNQN. The disordered stretch occupies residues 105–125; it reads GSDSGQSNGSGDNQNKTIPRK. Transmembrane regions (helical) follow at residues 917-937, 967-987, 1010-1030, 1084-1104, 1660-1680, 1709-1729, 1730-1750, and 1752-1772; these read VSTVIAIFLIILALYLIILLI, VFAGIVAIVSSFLGVLFAFLL, WLSFFGSFFITFFVFEFISWI, LFTYVGLSSVALLLIGIAGTI, FLLGTIIPFIFITCVVLGISM, FIPAFVLALLISIGVLAGVLI, GIQAVVFNVAQVFLTNVFEFL, and YMVGIVLFGVTIFVIGSYFWI.

This sequence belongs to the ABC-4 integral membrane protein family.

Its subcellular location is the cell membrane. This is an uncharacterized protein from Mycoplasma genitalium (strain ATCC 33530 / DSM 19775 / NCTC 10195 / G37) (Mycoplasmoides genitalium).